Reading from the N-terminus, the 357-residue chain is tRNA-specific 2-thiouridylase MnmA (357 aa).

ATP contacts are provided by residues 3–10 and L29; that span reads AMSGGVDS. C98 functions as the Nucleophile in the catalytic mechanism. C98 and C196 are oxidised to a cystine. Residue G122 participates in ATP binding. Positions 146-148 are interaction with tRNA; the sequence is KDQ. Residue C196 is the Cysteine persulfide intermediate of the active site. Residues 302–303 form an interaction with tRNA region; it reads RY.

This sequence belongs to the MnmA/TRMU family.

The protein resides in the cytoplasm. The enzyme catalyses S-sulfanyl-L-cysteinyl-[protein] + uridine(34) in tRNA + AH2 + ATP = 2-thiouridine(34) in tRNA + L-cysteinyl-[protein] + A + AMP + diphosphate + H(+). In terms of biological role, catalyzes the 2-thiolation of uridine at the wobble position (U34) of tRNA, leading to the formation of s(2)U34. In Moorella thermoacetica (strain ATCC 39073 / JCM 9320), this protein is tRNA-specific 2-thiouridylase MnmA.